We begin with the raw amino-acid sequence, 302 residues long: Large ribosomal subunit protein uL18 (302 aa).

It belongs to the universal ribosomal protein uL18 family. Component of the large ribosomal subunit (LSU).

It localises to the cytoplasm. The protein localises to the nucleus. In terms of biological role, component of the ribosome, a large ribonucleoprotein complex responsible for the synthesis of proteins in the cell. The small ribosomal subunit (SSU) binds messenger RNAs (mRNAs) and translates the encoded message by selecting cognate aminoacyl-transfer RNA (tRNA) molecules. The large subunit (LSU) contains the ribosomal catalytic site termed the peptidyl transferase center (PTC), which catalyzes the formation of peptide bonds, thereby polymerizing the amino acids delivered by tRNAs into a polypeptide chain. The nascent polypeptides leave the ribosome through a tunnel in the LSU and interact with protein factors that function in enzymatic processing, targeting, and the membrane insertion of nascent chains at the exit of the ribosomal tunnel. The sequence is that of Large ribosomal subunit protein uL18 (RPL5) from Cucumis sativus (Cucumber).